The following is a 1003-amino-acid chain: SWI/SNF-related matrix-associated actin-dependent regulator of chromatin subfamily A containing DEAD/H box 1 (1003 aa).

Disordered stretches follow at residues 15–130 (KKID…SKYK), 172–235 (GSSR…HFPD), and 274–351 (AKKE…EDYS). Basic and acidic residues-rich tracts occupy residues 172–188 (GSSR…DSSP), 221–235 (KQEA…HFPD), and 274–294 (AKKE…DNKS). In terms of domain architecture, CUE spans 221-264 (KQEASVKKLQRHFPDLDKEELREVLQEHDWSFHEALEALKLFAE). The segment covering 295-311 (SAKAKANQNSNKAMAQN) has biased composition (low complexity). Residues 321–333 (KYSENAKRDTRDL) show a composition bias toward basic and acidic residues. The Helicase ATP-binding domain occupies 486 to 654 (ALLHKHKVNM…MSLLNFVMPH (169 aa)). 499 to 506 (DEMGLGKT) lines the ATP pocket. The short motif at 605 to 608 (DEGH) is the DEGH box element. The region spanning 835–997 (ILEKLLSDIK…TIPLDMATLL (163 aa)) is the Helicase C-terminal domain.

Belongs to the SNF2/RAD54 helicase family.

The protein localises to the nucleus. The protein resides in the chromosome. It carries out the reaction ATP + H2O = ADP + phosphate + H(+). Functionally, DNA helicase that possesses intrinsic ATP-dependent nucleosome-remodeling activity and is both required for DNA repair and heterochromatin organization. Promotes DNA end resection of double-strand breaks (DSBs) following DNA damage: probably acts by weakening histone DNA interactions in nucleosomes flanking DSBs. Required for the restoration of heterochromatin organization after replication. The polypeptide is SWI/SNF-related matrix-associated actin-dependent regulator of chromatin subfamily A containing DEAD/H box 1 (smarcad1) (Xenopus tropicalis (Western clawed frog)).